Consider the following 715-residue polypeptide: Methionine--tRNA ligase (715 aa).

The 'HIGH' region signature appears at 17-27 (PYANGPIHLGH). Residues Cys-148, Cys-151, Cys-161, and Cys-164 each coordinate Zn(2+). A 'KMSKS' region motif is present at residues 359–363 (KMSKS). An ATP-binding site is contributed by Lys-362. A tRNA-binding domain is found at 614-715 (DLSKVELRVG…KDAKPGDRLK (102 aa)).

It belongs to the class-I aminoacyl-tRNA synthetase family. MetG type 1 subfamily. In terms of assembly, homodimer. Zn(2+) is required as a cofactor.

The protein resides in the cytoplasm. It catalyses the reaction tRNA(Met) + L-methionine + ATP = L-methionyl-tRNA(Met) + AMP + diphosphate. In terms of biological role, is required not only for elongation of protein synthesis but also for the initiation of all mRNA translation through initiator tRNA(fMet) aminoacylation. This is Methionine--tRNA ligase from Leptospira interrogans serogroup Icterohaemorrhagiae serovar Lai (strain 56601).